Consider the following 853-residue polypeptide: MNAYEGDTLNNHGKSSTRQHWRKRSAVSSSLEFSSYEESNSPIENTEVLKVSEIEAKKRRRKKHRYIYLAVCLFFLASVLSCAIIFRFYLHTNRENFSLFKNDSYKQKEPITVSHFGESIFLPYHQDIEWITSTEGTVLYYDQSTFSLSLFYPDGKEYGSNVDSLITSFVLTCKNLHRKRYSSDMEYIAFSCSKDRRWRHSYYEDVYLVERATGRIEHLASDQSKKIVVAEWSPIGHKLVYGLGSNLFIWESFSEPPVCITDQSDLDGLFNGNSDWVYEEEILQSSKAVWWSPDGNCLSYLSIDDSKVPVHVLPFEQLDSKVEDQNRVNNFFHYSTPKDPIPFVKLFVNCFTDSGESIEVDSSFPLSTQHRYITDVAWAGNEKLMFVEVLRGNYERVTSLFDLSSRKTTIENTEVSEHPLALTSSLHLKYLSFESLGNLKERYVRQYFLSNKKRIAIYELDNPVPIYLTPVNISFLSDLYLINNTLYFTAISSGSPFSRVYRLCTKSLILSEINIQIGSGLFGIKVSNDQNYLLVNYLGPEIPKQFIYSIHEDKVSTSNDHSKNNLPSDSSSTSLGKVKLELCNSLETNEELIITKEKFAFPSVFFKVIKVKNITAYIQEIRPPNFNPRKRYPTVFHLYGAPQSALVTGKYEMDINELMASVYNFLVIKVDIVDISDVSGQHLFSDSHELIIKSWIELLRSYVDTPYIDRHRVGIWGWSFGGYLTLKILENADFIKTGAVVAPVTDWRYYDAYYSENLLGAYSKQTTAIYDKTAVHYSENFRKLCGLLVLHGTSDDNVHIENTMQLTKAMVEKGVYNYYPFIVPNANHEFSDPTDYTFLREKLSGHFHHALYC.

Residues 1–26 (MNAYEGDTLNNHGKSSTRQHWRKRSA) form a disordered region. Over 1–65 (MNAYEGDTLN…AKKRRRKKHR (65 aa)) the chain is Cytoplasmic. The segment covering 15-25 (SSTRQHWRKRS) has biased composition (basic residues). The helical; Signal-anchor for type II membrane protein transmembrane segment at 66-86 (YIYLAVCLFFLASVLSCAIIF) threads the bilayer. Over 87-853 (RFYLHTNREN…SGHFHHALYC (767 aa)) the chain is Lumenal. N96, N102, N472, N483, and N613 each carry an N-linked (GlcNAc...) asparagine glycan. Catalysis depends on charge relay system residues S719, D795, and H828.

Belongs to the peptidase S9B family.

It localises to the vacuole membrane. In Schizosaccharomyces pombe (strain 972 / ATCC 24843) (Fission yeast), this protein is Putative dipeptidyl aminopeptidase C14C4.15c.